Here is a 93-residue protein sequence, read N- to C-terminus: SH3 domain-binding glutamic acid-rich-like protein 3 (93 aa).

The residue at position 2 (serine 2) is an N-acetylserine. Positions serine 2 to alanine 93 constitute a Glutaredoxin domain. An O-linked (GalNAc...) threonine glycan is attached at threonine 9.

It belongs to the SH3BGR family. As to quaternary structure, homodimer. Interacts with MYO1C (via its IQ motifs); the interaction is dependent on calcium and takes place at membrane ruffles. May be glycosylated.

It is found in the cytoplasm. The protein localises to the cytosol. It localises to the cell projection. Its subcellular location is the ruffle membrane. The protein resides in the nucleus. In terms of biological role, could act as a modulator of glutaredoxin biological activity. May play a role in cytoskeleton organization. The sequence is that of SH3 domain-binding glutamic acid-rich-like protein 3 (Sh3bgrl3) from Mus musculus (Mouse).